A 2327-amino-acid polypeptide reads, in one-letter code: Pre-mRNA-processing-splicing factor 8 homolog (2327 aa).

Positions 1–14 (MDDTNSNINQSNES) are enriched in polar residues. The disordered stretch occupies residues 1 to 20 (MDDTNSNINQSNESQHLEEK). Positions 801–1292 (TTVHWLEKRR…KIQTRVKIGL (492 aa)) are reverse transcriptase homology domain. The tract at residues 1293-1566 (NSKMPNRFPP…TLKISLIQIF (274 aa)) is linker. An important for branch point selection region spans residues 1502–1515 (MKYKKLTHAQRSGL). Residues 1570-1740 (LWQKIHESLV…LRERIRKGLQ (171 aa)) form a restriction endonuclease homology domain region. The segment at 1657–2023 (GDFDSHDIER…QIAEIEKQKT (367 aa)) is involved in interaction with pre-mRNA 5' splice site. Positions 1755-2008 (NFGELFSNKI…ILGMEISAPS (254 aa)) are RNase H homology domain. One can recognise an MPN domain in the interval 2093 to 2223 (TYVFPKNILK…LTAYHLTPSG (131 aa)).

Part of the U5 snRNP complex and of the U4/U6-U5 tri-snRNP complex.

The protein localises to the nucleus speckle. Its function is as follows. Functions as a scaffold that mediates the ordered assembly of spliceosomal proteins and snRNAs. Required for the assembly of the U4/U6-U5 tri-snRNP complex. Functions as a scaffold that positions spliceosomal U2, U5 and U6 snRNAs at splice sites on pre-mRNA substrates, so that splicing can occur. Interacts with both the 5' and the 3' splice site. The chain is Pre-mRNA-processing-splicing factor 8 homolog (prpf8) from Dictyostelium discoideum (Social amoeba).